We begin with the raw amino-acid sequence, 381 residues long: tRNA-cytidine(32) 2-sulfurtransferase (381 aa).

The PP-loop motif signature appears at 101–106 (SGGKDS). The [4Fe-4S] cluster site is built by Cys176, Cys179, and Cys267.

This sequence belongs to the TtcA family. Homodimer. It depends on Mg(2+) as a cofactor. The cofactor is [4Fe-4S] cluster.

The protein localises to the cytoplasm. It catalyses the reaction cytidine(32) in tRNA + S-sulfanyl-L-cysteinyl-[cysteine desulfurase] + AH2 + ATP = 2-thiocytidine(32) in tRNA + L-cysteinyl-[cysteine desulfurase] + A + AMP + diphosphate + H(+). It participates in tRNA modification. Catalyzes the ATP-dependent 2-thiolation of cytidine in position 32 of tRNA, to form 2-thiocytidine (s(2)C32). The sulfur atoms are provided by the cysteine/cysteine desulfurase (IscS) system. This is tRNA-cytidine(32) 2-sulfurtransferase from Psychrobacter arcticus (strain DSM 17307 / VKM B-2377 / 273-4).